Consider the following 61-residue polypeptide: DNA-directed RNA polymerase subunit 12-like protein (61 aa).

Positions 21, 24, 38, and 41 each coordinate Zn(2+).

Belongs to the archaeal Rpo12/eukaryotic RPC10 RNA polymerase subunit family.

The protein localises to the nucleus. The protein is DNA-directed RNA polymerase subunit 12-like protein (NRPB12L) of Arabidopsis thaliana (Mouse-ear cress).